A 43-amino-acid chain; its full sequence is uncharacterized protein (43 aa).

This is an uncharacterized protein from Homo sapiens (Human).